Reading from the N-terminus, the 408-residue chain is 3-ketoacyl-CoA thiolase B, peroxisomal (408 aa).

The active-site Acyl-thioester intermediate is C112. Residues H366 and C394 each act as proton acceptor in the active site.

This sequence belongs to the thiolase-like superfamily. Thiolase family. As to quaternary structure, homodimer.

It is found in the peroxisome. The catalysed reaction is an acyl-CoA + acetyl-CoA = a 3-oxoacyl-CoA + CoA. It participates in lipid metabolism; fatty acid metabolism. This is 3-ketoacyl-CoA thiolase B, peroxisomal from Candida tropicalis (Yeast).